Consider the following 536-residue polypeptide: Adenine deaminase (536 aa).

Positions 1 to 24 (MTPSPHDLLHCGMNSQDRDETNGD) are disordered.

This sequence belongs to the metallo-dependent hydrolases superfamily. Adenine deaminase family. It depends on Mn(2+) as a cofactor.

It catalyses the reaction adenine + H2O + H(+) = hypoxanthine + NH4(+). The polypeptide is Adenine deaminase (Deinococcus radiodurans (strain ATCC 13939 / DSM 20539 / JCM 16871 / CCUG 27074 / LMG 4051 / NBRC 15346 / NCIMB 9279 / VKM B-1422 / R1)).